Reading from the N-terminus, the 533-residue chain is Malate synthase A (533 aa).

Arg-166 functions as the Proton acceptor in the catalytic mechanism. The active-site Proton donor is the Asp-447.

Belongs to the malate synthase family.

The protein localises to the cytoplasm. The catalysed reaction is glyoxylate + acetyl-CoA + H2O = (S)-malate + CoA + H(+). Its pathway is carbohydrate metabolism; glyoxylate cycle; (S)-malate from isocitrate: step 2/2. The chain is Malate synthase A (aceB) from Escherichia coli (strain K12).